The chain runs to 1407 residues: DNA-directed RNA polymerase subunit beta' (1407 aa).

Zn(2+) is bound by residues Cys70, Cys72, Cys85, and Cys88. Asp460, Asp462, and Asp464 together coordinate Mg(2+). Position 972 is an N6-acetyllysine (Lys972).

Belongs to the RNA polymerase beta' chain family. The RNAP catalytic core consists of 2 alpha, 1 beta, 1 beta' and 1 omega subunit. When a sigma factor is associated with the core the holoenzyme is formed, which can initiate transcription. Mg(2+) serves as cofactor. It depends on Zn(2+) as a cofactor.

It carries out the reaction RNA(n) + a ribonucleoside 5'-triphosphate = RNA(n+1) + diphosphate. Functionally, DNA-dependent RNA polymerase catalyzes the transcription of DNA into RNA using the four ribonucleoside triphosphates as substrates. In Escherichia coli O6:K15:H31 (strain 536 / UPEC), this protein is DNA-directed RNA polymerase subunit beta'.